The sequence spans 149 residues: UPF0178 protein Psyc_0274 (149 aa).

The protein belongs to the UPF0178 family.

The sequence is that of UPF0178 protein Psyc_0274 from Psychrobacter arcticus (strain DSM 17307 / VKM B-2377 / 273-4).